A 145-amino-acid chain; its full sequence is 3-dehydroquinate dehydratase (145 aa).

Y22 serves as the catalytic Proton acceptor. Positions 71, 77, and 84 each coordinate substrate. Residue H97 is the Proton donor of the active site. Substrate is bound by residues 98–99 (LS) and R108.

The protein belongs to the type-II 3-dehydroquinase family. As to quaternary structure, homododecamer.

It carries out the reaction 3-dehydroquinate = 3-dehydroshikimate + H2O. The protein operates within metabolic intermediate biosynthesis; chorismate biosynthesis; chorismate from D-erythrose 4-phosphate and phosphoenolpyruvate: step 3/7. Its function is as follows. Catalyzes a trans-dehydration via an enolate intermediate. The polypeptide is 3-dehydroquinate dehydratase (Francisella philomiragia subsp. philomiragia (strain ATCC 25017 / CCUG 19701 / FSC 153 / O#319-036)).